The chain runs to 96 residues: Co-chaperonin GroES (96 aa).

It belongs to the GroES chaperonin family. In terms of assembly, heptamer of 7 subunits arranged in a ring. Interacts with the chaperonin GroEL.

The protein localises to the cytoplasm. Its function is as follows. Together with the chaperonin GroEL, plays an essential role in assisting protein folding. The GroEL-GroES system forms a nano-cage that allows encapsulation of the non-native substrate proteins and provides a physical environment optimized to promote and accelerate protein folding. GroES binds to the apical surface of the GroEL ring, thereby capping the opening of the GroEL channel. The polypeptide is Co-chaperonin GroES (Acinetobacter baumannii (strain AB307-0294)).